We begin with the raw amino-acid sequence, 729 residues long: MGDYGFGVLVQSNTGNKSAFPVRFHPHLQPPHHHQNATPSPAAFINNNTAANGSSAGSAWLFPAPATHNIQDEILGSEKAKSQQQEQQDPLEKQQLSPSPGQEAGILPETEKAKSEENQGDNSSENGNGKEKIRIESPVLTGFDYQEATGLGTSTQPLTSSASSLTGFSNWSAAIAPSSSTIINEDASFFHQGGVPAASANNGALLFQNFPHHVSPGFGGSFSPQIGPLSQHHPHHPHFQHHHSQHQQQRRSPASPHPPPFTHRNAAFNQLPHLANNLNKPPSPWSSYQSPSPTPSSSWSPGGGGYGGWGGSQGRDHRRGLNGGITPLNSISPLKKNFASNHIQLQKYARPSSAFAPKSWMEDSLNRADNIFPFPDRPRTFDMHSLESSLIDIMRAENDTIKGRLNYSYPGSDSSLLINARTYGRRRGQSSLFPMEDGFLDDGRGDQPLHSGLGSPHCFSHQNGERVERYSRKVFVGGLPPDIDEDEITASFRRFGPLIVDWPHKAESKSYFPPKGYAFLLFQDESSVQALIDACIEEDGKLYLCVSSPTIKDKPVQIRPWNLSDSDFVMDGSQPLDPRKTIFVGGVPRPLRAVELAMIMDRLYGGVCYAGIDTDPELKYPKGAGRVAFSNQQSYIAAISARFVQLQHGEIDKRVEVKPYVLDDQLCDECQGARCGGKFAPFFCANVTCLQYYCEYCWAAIHSRAGREFHKPLVKEGGDRPRHISFRWN.

2 disordered regions span residues 20–49 (FPVR…NNNT) and 78–133 (EKAK…KEKI). Positions 24–35 (FHPHLQPPHHHQ) are enriched in basic residues. Low complexity predominate over residues 83–96 (QQQEQQDPLEKQQL). A phosphoserine mark is found at Ser-97, Ser-99, and Ser-137. A disordered region spans residues 218–328 (FGGSFSPQIG…RGLNGGITPL (111 aa)). Positions 232–249 (HHPHHPHFQHHHSQHQQQ) are enriched in basic residues. 2 positions are modified to phosphoserine: Ser-252 and Ser-255. Over residues 285–300 (WSSYQSPSPTPSSSWS) the composition is skewed to low complexity. The segment covering 301–313 (PGGGGYGGWGGSQ) has biased composition (gly residues). Phosphothreonine is present on Thr-326. 2 positions are modified to phosphoserine: Ser-330 and Ser-332. RRM domains follow at residues 472 to 563 (RKVF…PWNL) and 580 to 662 (KTIF…PYVL). The RNA-binding stretch occupies residues 541-543 (KLY). Residues Cys-667, Cys-675, Cys-684, Cys-689, Cys-694, Cys-697, His-702, and His-710 each contribute to the Zn(2+) site.

It belongs to the RRM CPEB family. In terms of assembly, interacts with TOB1. As to expression, expressed in pancreas in islets and ductal cells (at protein level). Expressed in melanocytes.

It localises to the cytoplasm. Its subcellular location is the cell projection. The protein resides in the dendrite. It is found in the dendritic spine. The protein localises to the postsynaptic density. It localises to the axon. Its subcellular location is the growth cone. The protein resides in the endoplasmic reticulum. It is found in the perinuclear region. In terms of biological role, sequence-specific RNA-binding protein that binds to the cytoplasmic polyadenylation element (CPE), an uridine-rich sequence element (consensus sequence 5'-UUUUUAU-3') within the mRNA 3'-UTR. RNA binding results in a clear conformational change analogous to the Venus fly trap mechanism. Regulates activation of unfolded protein response (UPR) in the process of adaptation to ER stress in liver, by maintaining translation of CPE-regulated mRNAs in conditions in which global protein synthesis is inhibited. Required for cell cycle progression, specifically for cytokinesis and chromosomal segregation. Plays a role as an oncogene promoting tumor growth and progression by positively regulating translation of t-plasminogen activator/PLAT. Stimulates proliferation of melanocytes. In contrast to CPEB1 and CPEB3, does not play role in synaptic plasticity, learning and memory. The protein is Cytoplasmic polyadenylation element-binding protein 4 (CPEB4) of Homo sapiens (Human).